A 249-amino-acid polypeptide reads, in one-letter code: Type III pantothenate kinase (249 aa).

Asp-6–Lys-13 lines the ATP pocket. Substrate-binding positions include Tyr-93 and Gly-100–Arg-103. Asp-102 functions as the Proton acceptor in the catalytic mechanism. Position 122 (Asp-122) interacts with K(+). Thr-125 serves as a coordination point for ATP. Thr-181 contacts substrate.

It belongs to the type III pantothenate kinase family. In terms of assembly, homodimer. The cofactor is NH4(+). K(+) is required as a cofactor.

Its subcellular location is the cytoplasm. It catalyses the reaction (R)-pantothenate + ATP = (R)-4'-phosphopantothenate + ADP + H(+). Its pathway is cofactor biosynthesis; coenzyme A biosynthesis; CoA from (R)-pantothenate: step 1/5. Catalyzes the phosphorylation of pantothenate (Pan), the first step in CoA biosynthesis. The chain is Type III pantothenate kinase from Pseudomonas fluorescens (strain Pf0-1).